Consider the following 293-residue polypeptide: Methylsterol monooxygenase 1 (293 aa).

2 helical membrane passes run 55–75 (LIVH…FQFI) and 100–120 (VLLF…YYFT). Residues 145 to 274 (CAVIEDTWHY…FTWWDRIFGT (130 aa)) enclose the Fatty acid hydroxylase domain. Positions 157–161 (HRLLH) match the Histidine box-1 motif. The Histidine box-2 motif lies at 170–174 (HKIHH). A helical membrane pass occupies residues 199–219 (FFIGIMLLCDHVILLWAWVTV). A Histidine box-3 motif is present at residues 249-255 (HHDFHHM).

Belongs to the sterol desaturase family. The cofactor is Fe cation. Ubiquitinated by MARCHF6, leading to proteasomal degradation.

The protein localises to the endoplasmic reticulum membrane. It carries out the reaction 4,4-dimethyl-5alpha-cholest-7-en-3beta-ol + 6 Fe(II)-[cytochrome b5] + 3 O2 + 5 H(+) = 4alpha-carboxy-4beta-methyl-5alpha-cholest-7-ene-3beta-ol + 6 Fe(III)-[cytochrome b5] + 4 H2O. It catalyses the reaction 4,4-dimethyl-5alpha-cholesta-8,24-dien-3beta-ol + 6 Fe(II)-[cytochrome b5] + 3 O2 + 5 H(+) = 4beta-methylzymosterol-4alpha-carboxylate + 6 Fe(III)-[cytochrome b5] + 4 H2O. The enzyme catalyses 4alpha-methylzymosterol + 6 Fe(II)-[cytochrome b5] + 3 O2 + 5 H(+) = 4alpha-carboxyzymosterol + 6 Fe(III)-[cytochrome b5] + 4 H2O. The catalysed reaction is 4alpha-methyl-5alpha-cholest-7-en-3beta-ol + 6 Fe(II)-[cytochrome b5] + 3 O2 + 5 H(+) = 4alpha-carboxy-5alpha-cholest-7-en-3beta-ol + 6 Fe(III)-[cytochrome b5] + 4 H2O. It carries out the reaction 4,4-dimethyl-5alpha-cholest-8-en-3beta-ol + 6 Fe(II)-[cytochrome b5] + 3 O2 + 5 H(+) = 4alpha-carboxy-4beta-methyl-5alpha-cholest-8-en-3beta-ol + 6 Fe(III)-[cytochrome b5] + 4 H2O. It catalyses the reaction 4alpha-methyl-5alpha-cholest-8-en-3beta-ol + 6 Fe(II)-[cytochrome b5] + 3 O2 + 5 H(+) = 4alpha-carboxy-5alpha-cholest-8-ene-3beta-ol + 6 Fe(III)-[cytochrome b5] + 4 H2O. The protein operates within steroid biosynthesis; zymosterol biosynthesis; zymosterol from lanosterol: step 3/6. It participates in steroid biosynthesis; cholesterol biosynthesis. Its function is as follows. Catalyzes the three-step monooxygenation required for the demethylation of 4,4-dimethyl and 4alpha-methylsterols, which can be subsequently metabolized to cholesterol. The protein is Methylsterol monooxygenase 1 (MSMO1) of Sus scrofa (Pig).